The primary structure comprises 123 residues: Small ribosomal subunit protein uS12 (123 aa).

Position 89 is a 3-methylthioaspartic acid (D89). A disordered region spans residues 101-123 (SLDTSGVKDRKQGRSKYGAKRPK). Over residues 113–123 (GRSKYGAKRPK) the composition is skewed to basic residues.

Belongs to the universal ribosomal protein uS12 family. As to quaternary structure, part of the 30S ribosomal subunit. Contacts proteins S8 and S17. May interact with IF1 in the 30S initiation complex.

With S4 and S5 plays an important role in translational accuracy. Its function is as follows. Interacts with and stabilizes bases of the 16S rRNA that are involved in tRNA selection in the A site and with the mRNA backbone. Located at the interface of the 30S and 50S subunits, it traverses the body of the 30S subunit contacting proteins on the other side and probably holding the rRNA structure together. The combined cluster of proteins S8, S12 and S17 appears to hold together the shoulder and platform of the 30S subunit. This is Small ribosomal subunit protein uS12 from Stutzerimonas stutzeri (strain A1501) (Pseudomonas stutzeri).